The chain runs to 214 residues: Dynein axonemal assembly factor 6 (214 aa).

Disordered stretches follow at residues 1–22 (MESE…QNVD) and 34–68 (ALSK…NIGP).

This sequence belongs to the PIH1 family. As to quaternary structure, interacts with HSPA1A/B and HSP90AA1. Interacts with DNAAF2 and DNAAF4. Interacts wuth DNAI2. In terms of tissue distribution, expressed in testis, small intestine, prostate, adrenal gland, spleen, lung, bladder, breast and ovary. Expressed in ciliated epithelial cells.

It localises to the cytoplasm. The protein resides in the golgi apparatus. It is found in the trans-Golgi network. Functionally, plays a role in cytoplasmic pre-assembly of axonemal dynein. The protein is Dynein axonemal assembly factor 6 of Homo sapiens (Human).